A 425-amino-acid polypeptide reads, in one-letter code: Serine--tRNA ligase (425 aa).

228–230 (TAE) contacts L-serine. 259–261 (RSE) is an ATP binding site. E282 contacts L-serine. 346–349 (EIAS) is an ATP binding site. S382 is a binding site for L-serine.

The protein belongs to the class-II aminoacyl-tRNA synthetase family. Type-1 seryl-tRNA synthetase subfamily. As to quaternary structure, homodimer. The tRNA molecule binds across the dimer.

It is found in the cytoplasm. It carries out the reaction tRNA(Ser) + L-serine + ATP = L-seryl-tRNA(Ser) + AMP + diphosphate + H(+). The enzyme catalyses tRNA(Sec) + L-serine + ATP = L-seryl-tRNA(Sec) + AMP + diphosphate + H(+). It participates in aminoacyl-tRNA biosynthesis; selenocysteinyl-tRNA(Sec) biosynthesis; L-seryl-tRNA(Sec) from L-serine and tRNA(Sec): step 1/1. Functionally, catalyzes the attachment of serine to tRNA(Ser). Is also able to aminoacylate tRNA(Sec) with serine, to form the misacylated tRNA L-seryl-tRNA(Sec), which will be further converted into selenocysteinyl-tRNA(Sec). This Rickettsia massiliae (strain Mtu5) protein is Serine--tRNA ligase.